We begin with the raw amino-acid sequence, 349 residues long: MDVVLEVVDTFIADYAYAYFYPKRLAPYDFPSPSNTTDTSAKAFSTWIYKPATQFITLEPPEQAYMSSWDRDNPLRQALTLYLITWIFGLLVYFIVATLSYIFIFDKRTFEHPRFIKNQVRMEIIAANKAMPVMAIITAPFFLLEVQGYGKLYDTTEDGPGLWYDFFQFPLFLLFTDFCIYWAHRWLHHRLVYKYLHKLHHKWIMPTPFASHAFHPLDGFTQSLPYHIFPFIFPLQKMAYVALFVFVNLWSVMIHDGEYLTNNPVVNGAACHSLHHSRFEVNYGQFFTAFDRMGGTYRMPEQWMFERDMKMSEGRWKKEIEKVDELIEEIEGSDNRTYTDSAPIMKKTQ.

The next 3 membrane-spanning stretches (helical) occupy residues 84–104 (ITWI…YIFI), 124–144 (IIAA…FFLL), and 162–182 (LWYD…CIYW). The 127-residue stretch at 170-296 (PLFLLFTDFC…FTAFDRMGGT (127 aa)) folds into the Fatty acid hydroxylase domain. The short motif at 184–188 (HRWLH) is the Histidine box-1 element. Positions 197 to 201 (HKLHH) match the Histidine box-2 motif. A helical membrane pass occupies residues 227-247 (HIFPFIFPLQKMAYVALFVFV). A Histidine box-3 motif is present at residues 272–276 (HSLHH).

Belongs to the sterol desaturase family.

Its subcellular location is the endoplasmic reticulum membrane. The catalysed reaction is episterol + 2 Fe(II)-[cytochrome b5] + O2 + 2 H(+) = 5-dehydroepisterol + 2 Fe(III)-[cytochrome b5] + 2 H2O. The protein operates within steroid metabolism; ergosterol biosynthesis. Functionally, C-5 sterol desaturase; part of the third module of ergosterol biosynthesis pathway that includes the late steps of the pathway. ERG3A and ERG3BB catalyze the introduction of a C-5 double bond in the B ring to produce 5-dehydroepisterol. The third module or late pathway involves the ergosterol synthesis itself through consecutive reactions that mainly occur in the endoplasmic reticulum (ER) membrane. Firstly, the squalene synthase ERG9 catalyzes the condensation of 2 farnesyl pyrophosphate moieties to form squalene, which is the precursor of all steroids. Squalene synthase is crucial for balancing the incorporation of farnesyl diphosphate (FPP) into sterol and nonsterol isoprene synthesis. Secondly, squalene is converted into lanosterol by the consecutive action of the squalene epoxidase ERG1 and the lanosterol synthase ERG7. Then, the delta(24)-sterol C-methyltransferase ERG6 methylates lanosterol at C-24 to produce eburicol. Eburicol is the substrate of the sterol 14-alpha demethylase encoded by CYP51A, CYP51B and CYP51C, to yield 4,4,24-trimethyl ergosta-8,14,24(28)-trienol. CYP51B encodes the enzyme primarily responsible for sterol 14-alpha-demethylation, and plays an essential role in ascospore formation. CYP51A encodes an additional sterol 14-alpha-demethylase, induced on ergosterol depletion and responsible for the intrinsic variation in azole sensitivity. The third CYP51 isoform, CYP51C, does not encode a sterol 14-alpha-demethylase, but is required for full virulence on host wheat ears. The C-14 reductase ERG24 then reduces the C14=C15 double bond which leads to 4,4-dimethylfecosterol. A sequence of further demethylations at C-4, involving the C-4 demethylation complex containing the C-4 methylsterol oxidases ERG25, the sterol-4-alpha-carboxylate 3-dehydrogenase ERG26 and the 3-keto-steroid reductase ERG27, leads to the production of fecosterol via 4-methylfecosterol. ERG28 has a role as a scaffold to help anchor ERG25, ERG26 and ERG27 to the endoplasmic reticulum. The C-8 sterol isomerase ERG2 then catalyzes the reaction which results in unsaturation at C-7 in the B ring of sterols and thus converts fecosterol to episterol. The sterol-C5-desaturases ERG3A and ERG3BB then catalyze the introduction of a C-5 double bond in the B ring to produce 5-dehydroepisterol. The C-22 sterol desaturases ERG5A and ERG5B further convert 5-dehydroepisterol into ergosta-5,7,22,24(28)-tetraen-3beta-ol by forming the C-22(23) double bond in the sterol side chain. Finally, ergosta-5,7,22,24(28)-tetraen-3beta-ol is substrate of the C-24(28) sterol reductase ERG4 to produce ergosterol. In Gibberella zeae (strain ATCC MYA-4620 / CBS 123657 / FGSC 9075 / NRRL 31084 / PH-1) (Wheat head blight fungus), this protein is Delta(7)-sterol 5(6)-desaturase ERG3A.